The sequence spans 750 residues: Xylosyl- and glucuronyltransferase LARGE2s (750 aa).

The Cytoplasmic segment spans residues 1–10 (MLCPCRGKLK). The helical; Signal-anchor for type II membrane protein transmembrane segment at 11–31 (LLVVSLSFVILFTWLYLLVGN) threads the bilayer. At 32–750 (SENGRSLLLS…LKYLTAQRNI (719 aa)) the chain is on the lumenal side. 3 N-linked (GlcNAc...) asparagine glycosylation sites follow: N116, N142, and N228. The segment at 132-407 (LHVACVCAGH…FLEYDGNLLR (276 aa)) is xylosyltransferase activity. The Mn(2+) site is built by D236 and D238. A glycan (N-linked (GlcNAc...) asparagine) is linked at N266. The interval 408-750 (RELFGCPSQA…LKYLTAQRNI (343 aa)) is glucuronyltransferase activity. 2 residues coordinate Mn(2+): D557 and D559.

In the C-terminal section; belongs to the glycosyltransferase 49 family. It in the N-terminal section; belongs to the glycosyltransferase 8 family. Mn(2+) serves as cofactor.

Its subcellular location is the golgi apparatus membrane. It carries out the reaction 3-O-[beta-D-GlcA-(1-&gt;3)-beta-D-Xyl-(1-&gt;4)-Rib-ol-P-Rib-ol-P-3-beta-D-GalNAc-(1-&gt;3)-beta-D-GlcNAc-(1-&gt;4)-(O-6-P-alpha-D-Man)]-Thr-[protein] + UDP-alpha-D-xylose = 3-O-[alpha-D-Xyl-(1-&gt;3)-beta-D-GlcA-(1-&gt;4)-beta-D-Xyl-(1-&gt;4)-Rib-ol-P-Rib-ol-P-3-beta-D-GalNAc-(1-&gt;3)-beta-D-GlcNAc-(1-&gt;4)-(O-6-P-alpha-D-Man)]-Thr-[protein] + UDP + H(+). The enzyme catalyses 3-O-{(1-&gt;[3)-alpha-D-Xyl-(1-&gt;3)-beta-D-GlcA-(1-&gt;](n)-4)-beta-D-Xyl-(1-&gt;4)-Rib-ol-P-Rib-ol-P-3-beta-D-GalNAc-(1-&gt;3)-beta-D-GlcNAc-(1-&gt;4)-O-6-P-alpha-D-Man}-L-Thr-[protein] + UDP-alpha-D-glucuronate = 3-O-{beta-D-GlcA-(1-&gt;[3)-alpha-D-Xyl-(1-&gt;3)-beta-D-GlcA-(1-&gt;](n)-4)-beta-D-Xyl-(1-&gt;4)-Rib-ol-P-Rib-ol-P-3-beta-D-GalNAc-(1-&gt;3)-beta-D-GlcNAc-(1-&gt;4)-O-6-P-alpha-D-Man}-L-Thr-[protein] + UDP + H(+). It catalyses the reaction 3-O-{beta-D-GlcA-(1-&gt;[3)-alpha-D-Xyl-(1-&gt;3)-beta-D-GlcA-(1-&gt;](n)-4)-beta-D-Xyl-(1-&gt;4)-Rib-ol-P-Rib-ol-P-3-beta-D-GalNAc-(1-&gt;3)-beta-D-GlcNAc-(1-&gt;4)-O-6-P-alpha-D-Man}-L-Thr-[protein] + UDP-alpha-D-xylose = 3-O-{(1-&gt;[3)-alpha-D-Xyl-(1-&gt;3)-beta-D-GlcA-(1-&gt;](n+1)-4)-beta-D-Xyl-(1-&gt;4)-Rib-ol-P-Rib-ol-P-3-beta-D-GalNAc-(1-&gt;3)-beta-D-GlcNAc-(1-&gt;4)-O-6-P-alpha-D-Man}-L-Thr-[protein] + UDP + H(+). The protein operates within protein modification; protein glycosylation. Bifunctional glycosyltransferase with both alpha-1,3-xylosyltransferase and beta-1,3-glucuronyltransferase activities involved in the maturation of alpha-dystroglycan (DAG1) by glycosylation leading to DAG1 binding to laminin G-like domain-containing extracellular proteins with high affinity and in a phosphorylated-O-mannosyl trisaccharide dependent manner. Elongates the glucuronyl-beta-1,4-xylose-beta disaccharide primer structure by adding repeating units [-3-Xylose-alpha-1,3-GlcA-beta-1-] to produce a heteropolysaccharide. Supports the maturation of DAG1 more effectively than LARGE1. In addition, can modify both heparan sulfate (HS)- and chondroitin/dermatan sulfate (CS/DS)-proteoglycans (PGs), namely GPC4, with a glycosaminoglycan (GAG)-like polysaccharide composed of xylose and glucuronic acid to confer laminin binding. The chain is Xylosyl- and glucuronyltransferase LARGE2s from Danio rerio (Zebrafish).